Here is a 42-residue protein sequence, read N- to C-terminus: Iota-conotoxin-like R11.15 (42 aa).

Cystine bridges form between C5–C19, C12–C22, C18–C27, and C21–C36.

This sequence belongs to the conotoxin I1 superfamily. As to expression, expressed by the venom duct.

The protein resides in the secreted. Iota-conotoxins bind to voltage-gated sodium channels (Nav) and act as agonists by shifting the voltage-dependence of activation to more hyperpolarized levels. Produces general excitatory symptoms. This chain is Iota-conotoxin-like R11.15, found in Conus radiatus (Rayed cone).